Consider the following 111-residue polypeptide: Large ribosomal subunit protein bL21 (111 aa).

It belongs to the bacterial ribosomal protein bL21 family. In terms of assembly, part of the 50S ribosomal subunit. Contacts protein L20.

This protein binds to 23S rRNA in the presence of protein L20. This is Large ribosomal subunit protein bL21 from Thermosynechococcus vestitus (strain NIES-2133 / IAM M-273 / BP-1).